The primary structure comprises 228 residues: MARTFILWLHGLGDSGPANEPIQTQFKSSELSNASWLFPSAPFNPVTCNNGAVMRSWFDVPELPFKVGSPIDESSVLEAVKNVHAIIDQEIAEGTNPENVFICGLSQGGALTLASVLLYPKTLGGGAVLSGWVPFTSSIISQFPEEAKKTPILWSHGTDDRMVLFEAGQAALPFLKEAGVTCEFKAYPGLGHSISNKELKYIESWIKRRLKGSSSTCLQLNCLKEMFH.

Residues S106, D160, and H192 each act as charge relay system in the active site.

Belongs to the AB hydrolase superfamily. AB hydrolase 2 family.

Functionally, possesses carboxylesterase activity in vitro with a preference for short acyl chain substrates. Functions as a negative regulator of the hypersensitive response (HR) triggered by the bacterial type III effector protein AvrBsT. Possesses phospholipase A2 (PLA2) activity and hydrolyzes phosphatidylcholine (PC), a lipid that is hydrolyzed by phospholipase D (PLD) to produce phosphatidic acid (PA). Required to suppress AvrBsT-dependent HR and PLD-dependent production of PA in response to AvrBsT elicitation. The sequence is that of Carboxylesterase SOBER1 from Arabidopsis thaliana (Mouse-ear cress).